The sequence spans 130 residues: Probable pilin MJ0835.1 (130 aa).

Residues M1–A14 constitute a propeptide that is removed on maturation. The QXSXEXXXL signature appears at Q15–L23.

The N-terminus is cleaved by the prepilin peptidase EppA, which recognizes the class III signal sequence.

It is found in the secreted. It localises to the cell surface. The protein resides in the fimbrium. This is Probable pilin MJ0835.1 from Methanocaldococcus jannaschii (strain ATCC 43067 / DSM 2661 / JAL-1 / JCM 10045 / NBRC 100440) (Methanococcus jannaschii).